The primary structure comprises 518 residues: Nuclear receptor ROR-gamma (518 aa).

The interval 1-30 (MDRAPQRQHQASRELLAAKKTHTSQIEVIP) is modulating. NR C4-type zinc fingers lie at residues 31–51 (CKIC…CEGC) and 67–91 (CTRQ…LQKC). The segment at residues 31–96 (CKICGDKSSG…RLQKCLALGM (66 aa)) is a DNA-binding region (nuclear receptor). 2 disordered regions span residues 105–183 (RMSK…SGSG) and 238–258 (HPGL…SFRS). Over residues 109–118 (KQRDSLHAEV) the composition is skewed to basic and acidic residues. Low complexity predominate over residues 119–130 (QKQLQQRQQQQQ). The 240-residue stretch at 269-508 (EIEHLVQSVC…PPLYKELFST (240 aa)) folds into the NR LBD domain. The AF-2 signature appears at 501 to 506 (LYKELF).

This sequence belongs to the nuclear hormone receptor family. NR1 subfamily. In terms of assembly, interacts (via AF-2 motif) with the coactivators NCOA1, NCOA2 and PPARGC1A (via LXXLL motif). Interacts with the corepressor NCOR1. Interacts with CRY1. Interacts (via AF-2 motif) with PROX1. Interacts with FOXP3. Interacts with NR0B2.

It localises to the nucleus. Its function is as follows. Nuclear receptor that binds DNA as a monomer to ROR response elements (RORE) containing a single core motif half-site 5'-AGGTCA-3' preceded by a short A-T-rich sequence. Key regulator of cellular differentiation, immunity, peripheral circadian rhythm as well as lipid, steroid, xenobiotics and glucose metabolism. Considered to have intrinsic transcriptional activity, have some natural ligands like oxysterols that act as agonists (25-hydroxycholesterol) or inverse agonists (7-oxygenated sterols), enhancing or repressing the transcriptional activity, respectively. Recruits distinct combinations of cofactors to target gene regulatory regions to modulate their transcriptional expression, depending on the tissue, time and promoter contexts. Regulates the circadian expression of clock genes such as CRY1, BMAL1 and NR1D1 in peripheral tissues and in a tissue-selective manner. Competes with NR1D1 for binding to their shared DNA response element on some clock genes such as BMAL1, CRY1 and NR1D1 itself, resulting in NR1D1-mediated repression or RORC-mediated activation of the expression, leading to the circadian pattern of clock genes expression. Therefore influences the period length and stability of the clock. Involved in the regulation of the rhythmic expression of genes involved in glucose and lipid metabolism, including PLIN2 and AVPR1A. Negative regulator of adipocyte differentiation through the regulation of early phase genes expression, such as MMP3. Controls adipogenesis as well as adipocyte size and modulates insulin sensitivity in obesity. In liver, has specific and redundant functions with RORA as positive or negative modulator of expression of genes encoding phase I and Phase II proteins involved in the metabolism of lipids, steroids and xenobiotics, such as SULT1E1. Also plays a role in the regulation of hepatocyte glucose metabolism through the regulation of G6PC1 and PCK1. Essential for thymopoiesis and the development of several secondary lymphoid tissues, including lymph nodes and Peyer's patches. Required for the generation of LTi (lymphoid tissue inducer) cells. Regulates thymocyte survival through DNA-binding on ROREs of target gene promoter regions and recruitment of coactivaros via the AF-2. Also plays a key role, downstream of IL6 and TGFB and synergistically with RORA, for lineage specification of uncommitted CD4(+) T-helper (T(H)) cells into T(H)17 cells, antagonizing the T(H)1 program. Probably regulates IL17 and IL17F expression on T(H) by binding to the essential enhancer conserved non-coding sequence 2 (CNS2) in the IL17-IL17F locus. May also play a role in the pre-TCR activation cascade leading to the maturation of alpha/beta T-cells and may participate in the regulation of DNA accessibility in the TCR-J(alpha) locus. Regulates the rhythmic expression of PROX1 and promotes its nuclear localization. Plays an indispensable role in the induction of IFN-gamma dependent anti-mycobacterial systemic immunity. The protein is Nuclear receptor ROR-gamma (RORC) of Pongo abelii (Sumatran orangutan).